The chain runs to 289 residues: Delta-sarcoglycan (289 aa).

Residues 1–37 are Cytoplasmic-facing; sequence MPQEQYSHHRSTMPSSEGPHIYKVGIYGWRKRCLYFF. A helical; Signal-anchor for type II membrane protein membrane pass occupies residues 38-56; the sequence is VLLLMILILVNLAMTIWIL. The Extracellular portion of the chain corresponds to 57-289; the sequence is KVMNFTIDGM…TCQINTSVCL (233 aa). N-linked (GlcNAc...) asparagine glycans are attached at residues asparagine 60 and asparagine 108. Cystine bridges form between cysteine 263-cysteine 288 and cysteine 265-cysteine 281. An N-linked (GlcNAc...) asparagine glycan is attached at asparagine 284.

This sequence belongs to the sarcoglycan beta/delta/gamma/zeta family. As to quaternary structure, interacts with FLNC. Cross-link to form 2 major subcomplexes: one consisting of SGCB, SGCD and SGCG and the other consisting of SGCB and SGCD. The association between SGCB and SGCG is particularly strong while SGCA is loosely associated with the other sarcoglycans. Interacts with DAG1. In terms of processing, disulfide bonds are present. Most strongly expressed in skeletal and heart muscle. Also detected in proliferating myoblasts.

Its subcellular location is the cell membrane. The protein localises to the sarcolemma. It is found in the cytoplasm. It localises to the cytoskeleton. Functionally, component of the sarcoglycan complex, a subcomplex of the dystrophin-glycoprotein complex which forms a link between the F-actin cytoskeleton and the extracellular matrix. This chain is Delta-sarcoglycan (Sgcd), found in Mus musculus (Mouse).